Consider the following 629-residue polypeptide: Embryonic polyadenylate-binding protein (629 aa).

RRM domains lie at 11-89 (ASLY…WSQR), 99-175 (GNVF…HFKS), 191-268 (TNVY…RAQK), and 294-370 (VNLY…LAQR). The region spanning 539–616 (QEPLTASSLA…AVAVLQAHQA (78 aa)) is the PABC domain.

The protein belongs to the polyadenylate-binding protein type-1 family. As to quaternary structure, interacts with dazl in an RNA-independent manner. The C-terminus can self-associate and also interact with the C-terminus of pabpc1, independently of RNA. RRM 1 and RRM 2 interact with both eif4g1 and paip1, and the C-terminus also interacts with paip1. Prior to oocyte maturation, found in a complex with dazl and pum2 proteins and spdy1 mRNA; pum2 dissociates from the complex during maturation. Interacts with the translation termination factor sup35/erf3.

It is found in the cytoplasm. Functionally, binds and protects the poly(A) tail of mRNA with or without an AU-rich element (ARE) and prevents mRNA deadenylation. Stimulates the translation of mRNAs to which it is bound during early development. The sequence is that of Embryonic polyadenylate-binding protein from Xenopus tropicalis (Western clawed frog).